The following is a 129-amino-acid chain: Aspartate 1-decarboxylase (129 aa).

The active-site Schiff-base intermediate with substrate; via pyruvic acid is Ser25. Ser25 bears the Pyruvic acid (Ser) mark. Thr57 is a binding site for substrate. Tyr58 (proton donor) is an active-site residue. 73-75 (GAA) serves as a coordination point for substrate.

The protein belongs to the PanD family. Heterooctamer of four alpha and four beta subunits. It depends on pyruvate as a cofactor. Post-translationally, is synthesized initially as an inactive proenzyme, which is activated by self-cleavage at a specific serine bond to produce a beta-subunit with a hydroxyl group at its C-terminus and an alpha-subunit with a pyruvoyl group at its N-terminus.

It localises to the cytoplasm. The catalysed reaction is L-aspartate + H(+) = beta-alanine + CO2. The protein operates within cofactor biosynthesis; (R)-pantothenate biosynthesis; beta-alanine from L-aspartate: step 1/1. Catalyzes the pyruvoyl-dependent decarboxylation of aspartate to produce beta-alanine. The protein is Aspartate 1-decarboxylase of Hydrogenovibrio crunogenus (strain DSM 25203 / XCL-2) (Thiomicrospira crunogena).